Reading from the N-terminus, the 522-residue chain is Maturase K (522 aa).

This sequence belongs to the intron maturase 2 family. MatK subfamily.

The protein localises to the plastid. It localises to the chloroplast. Usually encoded in the trnK tRNA gene intron. Probably assists in splicing its own and other chloroplast group II introns. The sequence is that of Maturase K from Iris sanguinea (Japanese iris).